Consider the following 65-residue polypeptide: Large ribosomal subunit protein bL32 (65 aa).

Residues 1-18 are compositionally biased toward basic residues; sequence MAVPKRRHSKSRTRKRRS. The disordered stretch occupies residues 1–20; it reads MAVPKRRHSKSRTRKRRSTY.

It belongs to the bacterial ribosomal protein bL32 family.

This Salinibacter ruber (strain DSM 13855 / M31) protein is Large ribosomal subunit protein bL32.